The following is a 360-amino-acid chain: MRKKMLASLQWRAIRMTTGISLLLFVCLISFMMFYYRLDPLVLLSSSWFGIPFILILLLISVTVGFASGYMYGNRLKTRIDTLIESILTFENGNFAYRIPPLGDDEIGLAADQLNEMAKRVELQVASLQKLSNERAEWQAQMKKSVISEERQRLARDLHDAVSQQLFAISMMTSAVLEHVKDADDKTVKRIRMVEHMAGEAQNEMRALLLHLRPVTLEGKGLKEGLTELLDEFRKKQPIDIEWDIQDTAISKGVEDHLFRIVQEALSNVFRHSKASKVTVILGIKNSQLRLKVIDNGKGFKMDQVKASSYGLNSMKERASEIGGVAEVISVEGKGTQIEVKVPIFPEEKGENERDSSIID.

The Cytoplasmic portion of the chain corresponds to M1 to R15. The chain crosses the membrane as a helical span at residues M16 to Y36. The Extracellular portion of the chain corresponds to R37–S47. Residues W48–S68 form a helical membrane-spanning segment. The Cytoplasmic segment spans residues G69–D360. Residues N74–A126 form the HAMP domain. Residues R153–P346 enclose the Histidine kinase domain. H159 is subject to Phosphohistidine; by autocatalysis.

It is found in the cell membrane. It carries out the reaction ATP + protein L-histidine = ADP + protein N-phospho-L-histidine.. Functionally, member of the two-component regulatory system LiaS/LiaR probably involved in response to a subset of cell wall-active antibiotics that interfere with the lipid II cycle in the cytoplasmic membrane (bacitracin, nisin, ramoplanin and vancomycin). Also seems to be involved in response to cationic antimicrobial peptides and secretion stress. Activates probably LiaR by phosphorylation. This Bacillus subtilis (strain 168) protein is Sensor histidine kinase LiaS (liaS).